Reading from the N-terminus, the 273-residue chain is Probable branched-chain-amino-acid aminotransferase (273 aa).

At K133 the chain carries N6-(pyridoxal phosphate)lysine.

Belongs to the class-IV pyridoxal-phosphate-dependent aminotransferase family. Pyridoxal 5'-phosphate is required as a cofactor.

The catalysed reaction is L-leucine + 2-oxoglutarate = 4-methyl-2-oxopentanoate + L-glutamate. It catalyses the reaction L-isoleucine + 2-oxoglutarate = (S)-3-methyl-2-oxopentanoate + L-glutamate. The enzyme catalyses L-valine + 2-oxoglutarate = 3-methyl-2-oxobutanoate + L-glutamate. Its pathway is amino-acid biosynthesis; L-isoleucine biosynthesis; L-isoleucine from 2-oxobutanoate: step 4/4. The protein operates within amino-acid biosynthesis; L-leucine biosynthesis; L-leucine from 3-methyl-2-oxobutanoate: step 4/4. It participates in amino-acid biosynthesis; L-valine biosynthesis; L-valine from pyruvate: step 4/4. Functionally, acts on leucine, isoleucine and valine. The polypeptide is Probable branched-chain-amino-acid aminotransferase (ilvE) (Thermotoga maritima (strain ATCC 43589 / DSM 3109 / JCM 10099 / NBRC 100826 / MSB8)).